The chain runs to 679 residues: Acetyl-coenzyme A synthetase 2 (679 aa).

Residues 1–32 form a disordered region; the sequence is MTSSPTHQVVHEANNIKKQETPKEFFERQPRQ. Residues 14-30 show a composition bias toward basic and acidic residues; it reads NNIKKQETPKEFFERQP. Residues 207–210 and Thr-326 contribute to the CoA site; that span reads RGGK. ATP is bound by residues 402–404, 426–431, Asp-517, and Arg-532; these read GEP and DTYWQT. Ser-540 is a binding site for CoA. Arg-543 provides a ligand contact to ATP. CoA is bound at residue Arg-611.

This sequence belongs to the ATP-dependent AMP-binding enzyme family.

The catalysed reaction is acetate + ATP + CoA = acetyl-CoA + AMP + diphosphate. In Debaryomyces hansenii (strain ATCC 36239 / CBS 767 / BCRC 21394 / JCM 1990 / NBRC 0083 / IGC 2968) (Yeast), this protein is Acetyl-coenzyme A synthetase 2 (ACS2).